Reading from the N-terminus, the 311-residue chain is Thioredoxin reductase (311 aa).

Residues 31-39 (FEKGMPGGQ) and 32-39 (EKGMPGGQ) each bind FAD. The cysteines at positions 133 and 136 are disulfide-linked. 281–290 (DIRIFAPKQV) contributes to the FAD binding site.

The protein belongs to the class-II pyridine nucleotide-disulfide oxidoreductase family. As to quaternary structure, homodimer. It depends on FAD as a cofactor.

The protein localises to the cytoplasm. It catalyses the reaction [thioredoxin]-dithiol + NADP(+) = [thioredoxin]-disulfide + NADPH + H(+). This is Thioredoxin reductase (trxB) from Helicobacter pylori (strain J99 / ATCC 700824) (Campylobacter pylori J99).